The primary structure comprises 320 residues: Bifunctional protein FolD 2 (320 aa).

NADP(+)-binding positions include 173–175 and I242; that span reads GRS.

Belongs to the tetrahydrofolate dehydrogenase/cyclohydrolase family. As to quaternary structure, homodimer.

It catalyses the reaction (6R)-5,10-methylene-5,6,7,8-tetrahydrofolate + NADP(+) = (6R)-5,10-methenyltetrahydrofolate + NADPH. The enzyme catalyses (6R)-5,10-methenyltetrahydrofolate + H2O = (6R)-10-formyltetrahydrofolate + H(+). It functions in the pathway one-carbon metabolism; tetrahydrofolate interconversion. In terms of biological role, catalyzes the oxidation of 5,10-methylenetetrahydrofolate to 5,10-methenyltetrahydrofolate and then the hydrolysis of 5,10-methenyltetrahydrofolate to 10-formyltetrahydrofolate. In Rubrobacter xylanophilus (strain DSM 9941 / JCM 11954 / NBRC 16129 / PRD-1), this protein is Bifunctional protein FolD 2.